A 276-amino-acid polypeptide reads, in one-letter code: Rhomboid protease GlpG (276 aa).

A run of 6 helical transmembrane segments spans residues 94–114 (GPVT…MQIL), 142–162 (ALMH…WYLG), 169–189 (LGSG…GYVQ), 192–212 (FSGP…GYVW), 229–249 (LIIF…GMSM), and 250–270 (ANGA…VDSL). S201 acts as the Nucleophile in catalysis. H254 is an active-site residue.

Belongs to the peptidase S54 family.

Its subcellular location is the cell inner membrane. It catalyses the reaction Cleaves type-1 transmembrane domains using a catalytic dyad composed of serine and histidine that are contributed by different transmembrane domains.. Rhomboid-type serine protease that catalyzes intramembrane proteolysis. This Escherichia coli O81 (strain ED1a) protein is Rhomboid protease GlpG.